A 582-amino-acid chain; its full sequence is Vesicular glutamate transporter 2 (582 aa).

Residues 1-71 (MESVKQRILA…CTCFGLPRRY (71 aa)) lie on the Cytoplasmic side of the membrane. The chain crosses the membrane as a helical span at residues 72 to 92 (IIAIMSGLGFCISFGIRCNLG). The Vesicular portion of the chain corresponds to 93–125 (VAIVDMVNNSTIHRGGKVIKEKAKFNWDPETVG). N100 and N101 each carry an N-linked (GlcNAc...) asparagine glycan. A helical membrane pass occupies residues 126–146 (MIHGSFFWGYIITQIPGGYIA). The Cytoplasmic segment spans residues 147-148 (SR). A helical membrane pass occupies residues 149–169 (LAANRVFGAAILLTSTLNMLI). The Vesicular portion of the chain corresponds to 170–177 (PSAARVHY). A helical transmembrane segment spans residues 178–198 (GCVIFVRILQGLVEGVTYPAC). Residues 199 to 216 (HGIWSKWAPPLERSRLAT) are Cytoplasmic-facing. A helical transmembrane segment spans residues 217–237 (TSFCGSYAGAVIAMPLAGILV). The Vesicular segment spans residues 238–244 (QYTGWSS). Residues 245–265 (VFYVYGSFGMVWYMFWLLVSY) traverse the membrane as a helical segment. At 266-310 (ESPAKHPTITDEERRYIEESIGESANLLGAMEKFKTPWRKFFTSM) the chain is on the cytoplasmic side. Residues 311 to 331 (PVYAIIVANFCRSWTFYLLLI) traverse the membrane as a helical segment. The Vesicular segment spans residues 332–349 (SQPAYFEEVFGFEISKVG). The helical transmembrane segment at 350–370 (MLSAVPHLVMTIIVPIGGQIA) threads the bilayer. Residues 371–386 (DFLRSKQILSTTTVRK) are Cytoplasmic-facing. Residues 387–407 (IMNCGGFGMEATLLLVVGYSH) traverse the membrane as a helical segment. At 408-409 (TR) the chain is on the vesicular side. The chain crosses the membrane as a helical span at residues 410 to 430 (GVAISFLVLAVGFSGFAISGF). Topologically, residues 431 to 443 (NVNHLDIAPRYAS) are cytoplasmic. A helical membrane pass occupies residues 444-464 (ILMGISNGVGTLSGMVCPIIV). The Vesicular segment spans residues 465–477 (GAMTKNKSREEWQ). The N-linked (GlcNAc...) asparagine glycan is linked to N470. A helical membrane pass occupies residues 478 to 498 (YVFLIAALVHYGGVIFYAIFA). Topologically, residues 499–582 (SGEKQPWADP…HSYKDRVDYS (84 aa)) are cytoplasmic.

Belongs to the major facilitator superfamily. Sodium/anion cotransporter family. VGLUT subfamily. As to expression, predominantly expressed in adult brain. Expressed in amygdala, caudate nucleus, cerebral cortex, frontal lobe, hippocampus, medulla, occipital lobe, putamen, spinal cord, substantia nigra, subthalamic nucleus, temporal lobe and thalamus.

Its subcellular location is the cytoplasmic vesicle. It is found in the secretory vesicle. It localises to the synaptic vesicle membrane. The protein localises to the synapse. The protein resides in the synaptosome. Its subcellular location is the cell membrane. It carries out the reaction L-glutamate(out) = L-glutamate(in). The catalysed reaction is 3 Na(+)(out) + phosphate(out) = 3 Na(+)(in) + phosphate(in). The enzyme catalyses phosphate(in) = phosphate(out). It catalyses the reaction K(+)(in) + H(+)(out) = K(+)(out) + H(+)(in). It carries out the reaction chloride(in) = chloride(out). Its activity is regulated as follows. Chloride channel activity is allosterically activated by lumenal H(+) and Cl(-) leading to synaptic vesicles acidification. The L-glutamate transport activity is allosterically activated by lumenal H(+) and Cl(-). The allosteric requirement for H(+) efficiently prevents non-vesicular efflux across the plasma membrane. The L-glutamate uniporter activity exhibits a biphasic dependence on chloride concentration. Multifunctional transporter that transports L-glutamate as well as multiple ions such as chloride, proton, potassium, sodium and phosphate. At the synaptic vesicle membrane, mainly functions as a uniporter which transports preferentially L-glutamate but also, phosphate from the cytoplasm into synaptic vesicles at presynaptic nerve terminals of excitatory neural cells. The L-glutamate or phosphate uniporter activity is electrogenic and is driven by the proton electrochemical gradient, mainly by the electrical gradient established by the vacuolar H(+)-ATPase across the synaptic vesicle membrane. In addition, functions as a chloride channel that allows the chloride permeation through the synaptic vesicle membrane therefore affects the proton electrochemical gradient and promotes synaptic vesicles acidification. Moreover, functions as a vesicular K(+)/H(+) antiport allowing to maintain the electrical gradient and to decrease chemical gradient and therefore sustain vesicular glutamate uptake. The vesicular H(+)/H(+) antiport activity is electroneutral. At the plasma membrane, following exocytosis, functions as a symporter of Na(+) and phosphate from the extracellular space to the cytoplasm allowing synaptic phosphate homeostasis regulation. The symporter activity is driven by an inside negative membrane potential and is electrogenic. Also involved in the regulation of retinal hyaloid vessel regression during postnatal development. May also play a role in the endocrine glutamatergic system of other tissues such as pineal gland and pancreas. The sequence is that of Vesicular glutamate transporter 2 from Homo sapiens (Human).